Here is a 197-residue protein sequence, read N- to C-terminus: Large ribosomal subunit protein bL25 (197 aa).

It belongs to the bacterial ribosomal protein bL25 family. CTC subfamily. In terms of assembly, part of the 50S ribosomal subunit; part of the 5S rRNA/L5/L18/L25 subcomplex. Contacts the 5S rRNA. Binds to the 5S rRNA independently of L5 and L18.

In terms of biological role, this is one of the proteins that binds to the 5S RNA in the ribosome where it forms part of the central protuberance. This chain is Large ribosomal subunit protein bL25, found in Carboxydothermus hydrogenoformans (strain ATCC BAA-161 / DSM 6008 / Z-2901).